A 452-amino-acid polypeptide reads, in one-letter code: Metacaspase-1 (452 aa).

Positions 1 to 97 (MYPGAGRPTY…GPPLQGRPRD (97 aa)) are disordered. The segment covering 16-41 (QKGPYGQPQYQQQYAPPYPERYQQPY) has biased composition (low complexity). Residues His-238 and Cys-294 contribute to the active site.

This sequence belongs to the peptidase C14B family.

Functionally, involved in cell death (apoptosis). This Eremothecium gossypii (strain ATCC 10895 / CBS 109.51 / FGSC 9923 / NRRL Y-1056) (Yeast) protein is Metacaspase-1 (MCA1).